Here is a 422-residue protein sequence, read N- to C-terminus: Glutamate-1-semialdehyde 2,1-aminomutase (422 aa).

An N6-(pyridoxal phosphate)lysine modification is found at K264.

It belongs to the class-III pyridoxal-phosphate-dependent aminotransferase family. HemL subfamily. As to quaternary structure, homodimer. Requires pyridoxal 5'-phosphate as cofactor.

It localises to the cytoplasm. It catalyses the reaction (S)-4-amino-5-oxopentanoate = 5-aminolevulinate. The protein operates within porphyrin-containing compound metabolism; protoporphyrin-IX biosynthesis; 5-aminolevulinate from L-glutamyl-tRNA(Glu): step 2/2. This chain is Glutamate-1-semialdehyde 2,1-aminomutase, found in Clostridium tetani (strain Massachusetts / E88).